Reading from the N-terminus, the 294-residue chain is Factor associated with metabolism and energy (294 aa).

A compositionally biased stretch (basic residues) spans 1–12 (MGLGHSKAHPRV). 2 disordered regions span residues 1–28 (MGLGHSKAHPRVIKVTPLQSQETETPST) and 255–279 (FWDSSSSDSDELEKDERRPQALVRT). A lipid anchor (N-myristoyl glycine) is attached at Gly-2. Residues 17 to 28 (PLQSQETETPST) show a composition bias toward polar residues. Residues 268 to 279 (KDERRPQALVRT) are compositionally biased toward basic and acidic residues.

In terms of tissue distribution, expressed in proximal tubules of the kidney.

The protein localises to the cell membrane. It localises to the cytoplasmic vesicle. May be involved in tuning the metabolism, energy expenditure, and excretion processes. The polypeptide is Factor associated with metabolism and energy (Mus musculus (Mouse)).